The sequence spans 291 residues: ATP synthase gamma chain (291 aa).

Belongs to the ATPase gamma chain family. In terms of assembly, F-type ATPases have 2 components, CF(1) - the catalytic core - and CF(0) - the membrane proton channel. CF(1) has five subunits: alpha(3), beta(3), gamma(1), delta(1), epsilon(1). CF(0) has three main subunits: a, b and c.

The protein resides in the cell inner membrane. In terms of biological role, produces ATP from ADP in the presence of a proton gradient across the membrane. The gamma chain is believed to be important in regulating ATPase activity and the flow of protons through the CF(0) complex. This is ATP synthase gamma chain from Chlorobium limicola (strain DSM 245 / NBRC 103803 / 6330).